The sequence spans 313 residues: Homoserine O-acetyltransferase (313 aa).

Residue Cys142 is the Acyl-thioester intermediate of the active site. The substrate site is built by Lys163 and Ser191. His234 acts as the Proton acceptor in catalysis. The active site involves Glu236. Position 248 (Arg248) interacts with substrate.

It belongs to the MetA family.

The protein localises to the cytoplasm. The catalysed reaction is L-homoserine + acetyl-CoA = O-acetyl-L-homoserine + CoA. It functions in the pathway amino-acid biosynthesis; L-methionine biosynthesis via de novo pathway; O-acetyl-L-homoserine from L-homoserine: step 1/1. Its function is as follows. Transfers an acetyl group from acetyl-CoA to L-homoserine, forming acetyl-L-homoserine. The protein is Homoserine O-acetyltransferase of Streptococcus gordonii (strain Challis / ATCC 35105 / BCRC 15272 / CH1 / DL1 / V288).